The following is a 400-amino-acid chain: Spermatogenic leucine zipper protein 1 (400 aa).

Residues 1–27 (MADSDSSSEMPAHSPSPSPIPCAKQKP) form a disordered region. Serine 106 is subject to Phosphoserine. The tract at residues 116 to 127 (RNKLRFKDDLFI) is helix-loop-helix motif. The basic motif stretch occupies residues 128–193 (HFDPERENTM…HIRGEYRKLR (66 aa)). 2 coiled-coil regions span residues 182–231 (SVHI…KDIV) and 268–293 (LIAA…LHLH). Position 207 is a phosphoserine (serine 207). The tract at residues 252-273 (LEEQVKKLSQDTHSLHLIAALL) is leucine-zipper. The segment at 295–332 (AGPGHEKPLQTSGEQDKKCGEQDKKCGEQDKKCGEQDK) is disordered.

In terms of assembly, interacts with PPP1CC isoform gamma-2. Post-translationally, phosphorylated by MAPK1/ERK2 and MAPK3/ERK1.

It localises to the cytoplasm. It is found in the nucleus. Transcription factor that binds to the DNA sequence 5'-CANNTG-3'(E box) and the G-box motif. May play an important role in the regulation of cell proliferation and differentiation during spermatogenesis. This chain is Spermatogenic leucine zipper protein 1 (Spz1), found in Rattus norvegicus (Rat).